A 643-amino-acid polypeptide reads, in one-letter code: MASTSNLLDVVRHYQRSIEKHGEDEQRLLHCITKLFNLPIKFEHLQETGIGKTVNALRKISGEVGVAAKTLVTKWKAMVAKEDPSIASTPTAIHNEEDSGKTKSSDEDPDQENKGGNSSSGEDLNTSKHKSKHAKSTKHERSSSSRSHSKSRSDSDKKHKSSRHDKSKDRDKDREGQKEAKEHKEKKSNGEHKSKDSSKSSSSHKSSKSESHKSEHTKSKHEKDKTSHSELKEVKDKSSKHKSSSSKSSKRSHSPPRHEEESQKAKIPKVKSKSEEDSADGFDSSMGANFDDVLGLLNIPISSKKSSSNSKSKFVAKPTAAPSSSALSAPTTAGSSKEALSTSSRPTSKKPELLASTAKLEPLDPNIALELPTISNNYKPMPLNQTVMDVVFNQGGSHKAQASRYFNESEALAQGISSKTMRTKIYSGVRTGQILQVPSLFDLCTRVLQKNIDALEYTGGVPFEVLRPVLERATPQQLLNFEEYNPYLMDDSDVLWQQHVQRHCRSQRREEMETWREMFLRCQEEKDRKLSILAESIKASQKISEAPVRKTQLAFVDSMVKPPRSVQRKQEQYGTKGKLIATPAARVAALSSVTPNAAKVGDARLRVLAAARDTAQVGAGPARSKKAPLMAKTLQFMRGRLKR.

Positions 9–82 constitute a TFIIS N-terminal domain; the sequence is DVVRHYQRSI…TKWKAMVAKE (74 aa). 2 disordered regions span residues 86-289 and 302-351; these read IAST…MGAN and SSKK…SKKP. Basic and acidic residues predominate over residues 94 to 106; sequence HNEEDSGKTKSSD. The span at 114–124 shows a compositional bias: polar residues; sequence KGGNSSSGEDL. Residue Ser-120 is modified to Phosphoserine. Positions 127-136 are enriched in basic residues; sequence SKHKSKHAKS. 2 stretches are compositionally biased toward basic and acidic residues: residues 164 to 198 and 207 to 237; these read HDKS…KDSS and SKSE…VKDK. Over residues 238–255 the composition is skewed to basic residues; sequence SSKHKSSSSKSSKRSHSP. Residues 302-336 show a composition bias toward low complexity; sequence SSKKSSSNSKSKFVAKPTAAPSSSALSAPTTAGSS. An activation domain region spans residues 413 to 571; that stretch reads AQGISSKTMR…PPRSVQRKQE (159 aa). Positions 439 to 448 are interacting with Elongin BC complex; it reads SLFDLCTRVL.

The protein localises to the nucleus. SIII, also known as elongin, is a general transcription elongation factor that increases the RNA polymerase II transcription elongation past template-encoded arresting sites. Subunit A is transcriptionally active and its transcription activity is strongly enhanced by binding to the dimeric complex of the SIII regulatory subunits B and C (elongin BC complex). May play an important role in metamorphosis. The protein is Transcription elongation factor B polypeptide 3 (EloA) of Drosophila melanogaster (Fruit fly).